Reading from the N-terminus, the 202-residue chain is Alpha-latrotoxin-Lm1a (202 aa).

10 ANK repeats span residues 95 to 109, 110 to 120, 122 to 132, 133 to 138, 142 to 161, 163 to 170, 171 to 182, Lys-184, 185 to 191, and 193 to 202; these read LYNAASNPDSAVGFK, LMESPEININE, NDWPVASTLLR, SSNVNV, NSDTPLNLAYFIDQGADINT, NGHLNIVK, YLVEEEDLSVDG, YGIDMTI, and TALDIATDLK. The tract at residues 175 to 181 is 4C4.1 epitope; that stretch reads EEDLSVD.

Belongs to the cationic peptide 01 (latrotoxin) family. 03 (alpha-latrotoxin) subfamily. In terms of assembly, homotetramer in membranes. Processed by furin-like proteases at both the N- and C-termini. In terms of processing, contains 1 disulfide bond. Expressed in venom gland, cephalothorax, and abdomen tissues from both males and females.

The protein resides in the secreted. It is found in the target cell membrane. In terms of biological role, presynaptic neurotoxin that causes massive release of neurotransmitters from vertebrate (but not invertebrate) nerve terminals and endocrine cells via a complex mechanism involving activation of receptor(s) and toxin insertion into the plasma membrane with subsequent pore formation. Binds to neurexin-1-alpha (NRXN1) in a calcium dependent manner, adhesion G protein-coupled receptor L1 (ADGRL1, also termed latrophilin-1 and calcium-independent receptor of latrotoxin (CIRL)), and receptor-type tyrosine-protein phosphatase S (PTPRS), also termed PTP sigma. NRXN1 and PTPRS are suggested to provide a platform for binding and subsequent pore formation events. In contrast, binding to ADGRL1 does not involve oligomerization and channel formation, but direct downstream stimulation of the synaptic fusion machinery. The sequence is that of Alpha-latrotoxin-Lm1a from Latrodectus mactans (Black widow spider).